The chain runs to 622 residues: 1-deoxy-D-xylulose-5-phosphate synthase (622 aa).

Residues histidine 80 and 121 to 123 (GHS) contribute to the thiamine diphosphate site. Residue aspartate 152 coordinates Mg(2+). Thiamine diphosphate-binding positions include 153–154 (GA), asparagine 181, tyrosine 288, and glutamate 370. Asparagine 181 is a binding site for Mg(2+).

Belongs to the transketolase family. DXPS subfamily. Homodimer. Mg(2+) is required as a cofactor. The cofactor is thiamine diphosphate.

It carries out the reaction D-glyceraldehyde 3-phosphate + pyruvate + H(+) = 1-deoxy-D-xylulose 5-phosphate + CO2. It participates in metabolic intermediate biosynthesis; 1-deoxy-D-xylulose 5-phosphate biosynthesis; 1-deoxy-D-xylulose 5-phosphate from D-glyceraldehyde 3-phosphate and pyruvate: step 1/1. Its function is as follows. Catalyzes the acyloin condensation reaction between C atoms 2 and 3 of pyruvate and glyceraldehyde 3-phosphate to yield 1-deoxy-D-xylulose-5-phosphate (DXP). This Shewanella amazonensis (strain ATCC BAA-1098 / SB2B) protein is 1-deoxy-D-xylulose-5-phosphate synthase.